We begin with the raw amino-acid sequence, 247 residues long: Spermatogenesis-associated protein 46 (247 aa).

The disordered stretch occupies residues 125 to 164; that stretch reads QRDSCLPEDTADSVCSSSPSPENTCPREATKKSRPGPDTT. Positions 137–147 are enriched in polar residues; the sequence is SVCSSSPSPEN.

The protein resides in the nucleus membrane. In terms of biological role, plays a role in spermiogenesis and fertilization. The sequence is that of Spermatogenesis-associated protein 46 (SPATA46) from Bos taurus (Bovine).